Consider the following 423-residue polypeptide: Zinc transporter ZIP13 (423 aa).

At 1–15 (MPGCPCPGIGMAGQR) the chain is on the lumenal side. A helical membrane pass occupies residues 16 to 36 (LLFLAALALELLGGAGGSQQA). Topologically, residues 37–68 (LRSRGVAAACRLDSKESESWGALLSGERLETW) are cytoplasmic. The helical transmembrane segment at 69–89 (ICSLLGSLMVGLSGVFPLLVI) threads the bilayer. Over 90 to 108 (PLEMGTTLRSEAGARRLKQ) the chain is Lumenal. Residues 109–129 (LLSFALGGLLGNVFLHLLPEA) form a helical membrane-spanning segment. Topologically, residues 130–149 (WAYTNSASSGGERQSLQQQQ) are cytoplasmic. Residues 150–170 (QLGLWVIAGFLTFLVLEKLFF) traverse the membrane as a helical segment. The Lumenal segment spans residues 171-235 (DSKGKEETSQ…TIDNFTHGLA (65 aa)). Residues 236–256 (VAASFLVSKKIGLLTTMAILL) traverse the membrane as a helical segment. The short motif at 257 to 262 (HEIPHE) is the XEXPHE-motif element. The Cytoplasmic portion of the chain corresponds to 257–278 (HEIPHEVGDFAILLRAGFDRWS). Residues 279-299 (AAKLQLSTALGGLLGACFAIC) form a helical membrane-spanning segment. The Lumenal portion of the chain corresponds to 300–368 (AQSPKGVGTG…RAPPPATEET (69 aa)). A helical transmembrane segment spans residues 369 to 389 (VAWILPFTSGGFLYIALVNVL). Residues 390 to 401 (PDLLEEDDPWRS) lie on the Cytoplasmic side of the membrane. The chain crosses the membrane as a helical span at residues 402 to 422 (LQQVLLLCAGIVVMVLFSVFV). A topological domain (lumenal) is located at residue E423.

This sequence belongs to the ZIP transporter (TC 2.A.5) family. As to quaternary structure, homodimer.

It is found in the golgi apparatus membrane. The protein localises to the cytoplasmic vesicle membrane. The protein resides in the endoplasmic reticulum membrane. It carries out the reaction Zn(2+)(in) = Zn(2+)(out). Its function is as follows. Functions as a zinc transporter transporting Zn(2+) from the Golgi apparatus to the cytosol and thus influences the zinc level at least in areas of the cytosol. May regulate beige adipocyte differentiation. The chain is Zinc transporter ZIP13 from Bos taurus (Bovine).